Reading from the N-terminus, the 90-residue chain is Small ribosomal subunit protein bS16 (90 aa).

Belongs to the bacterial ribosomal protein bS16 family.

This Streptococcus thermophilus (strain CNRZ 1066) protein is Small ribosomal subunit protein bS16.